Reading from the N-terminus, the 414-residue chain is MEQPSPVTRQSFDEWIVPTYAPADFIVVRGEGSTLWDQQGKSYIDFAGGIAVNALGHGHPAVRAALIEQADKVWHLGNGYTNEPVLRLAKQLIDATFAEKVFFCNSGAEANEAALKLARKYALDNFANKAGQQGEKNQIVAFRNAFHGRTLFTVSAGGQPKYSQDFAPLPGGIHHGIFNDLASAEQLITDQTCAVIVEPIQGEGGVLPADKEFLHGLRALCDRHNALLIFDEIQTGVGRTGELYAYMHYGVSPDVLTSAKALGGGFPIGAMLTTTKYASALSVGSHGTTFGGNPLACAVAGTVLSLINQPTLLAGVKARHQWFIDELAEINARHNVFAEIRGRGLLIGCVLNAQYAGKSKEIVQAAAQYGLIALIAGPDVVRFAPSLIISPKEIKEGLARLAMGIEQVCQKVTS.

The residue at position 260 (K260) is an N6-(pyridoxal phosphate)lysine.

The protein belongs to the class-III pyridoxal-phosphate-dependent aminotransferase family. AstC subfamily. The cofactor is pyridoxal 5'-phosphate.

The enzyme catalyses N(2)-succinyl-L-ornithine + 2-oxoglutarate = N-succinyl-L-glutamate 5-semialdehyde + L-glutamate. It participates in amino-acid degradation; L-arginine degradation via AST pathway; L-glutamate and succinate from L-arginine: step 3/5. Its function is as follows. Catalyzes the transamination of N(2)-succinylornithine and alpha-ketoglutarate into N(2)-succinylglutamate semialdehyde and glutamate. Can also act as an acetylornithine aminotransferase. The polypeptide is Succinylornithine transaminase (Yersinia pseudotuberculosis serotype O:1b (strain IP 31758)).